Reading from the N-terminus, the 373-residue chain is Homoserine O-acetyltransferase (373 aa).

The region spanning 46-355 is the AB hydrolase-1 domain; the sequence is NAILICHPLT…NPNGHDSFLL (310 aa). The active-site Nucleophile is the S151. Residue R221 coordinates substrate. Residues D317 and H350 contribute to the active site. Residue D351 participates in substrate binding.

This sequence belongs to the AB hydrolase superfamily. MetX family. In terms of assembly, homodimer.

It localises to the cytoplasm. It carries out the reaction L-homoserine + acetyl-CoA = O-acetyl-L-homoserine + CoA. It functions in the pathway amino-acid biosynthesis; L-methionine biosynthesis via de novo pathway; O-acetyl-L-homoserine from L-homoserine: step 1/1. Its function is as follows. Transfers an acetyl group from acetyl-CoA to L-homoserine, forming acetyl-L-homoserine. The sequence is that of Homoserine O-acetyltransferase from Zymomonas mobilis subsp. mobilis (strain ATCC 31821 / ZM4 / CP4).